The chain runs to 406 residues: Odorant receptor 42a (406 aa).

Residues 1 to 44 lie on the Cytoplasmic side of the membrane; that stretch reads MDLRRWFPTLYTQSKDSPVRSRDATLYLLRCVFLMGVRKPPAKF. A helical membrane pass occupies residues 45-65; it reads FVAYVLWSFALNFCSTFYQPI. Residues 66 to 86 lie on the Extracellular side of the membrane; sequence GFLTGYISHLSEFSPGEFLTS. The chain crosses the membrane as a helical span at residues 87 to 107; sequence LQVAFNAWSCSTKVLIVWALV. Residues 108–142 lie on the Cytoplasmic side of the membrane; it reads KRFDEANNLLDEMDRRITDPGERLQIHRAVSLSNR. Residues 143-163 form a helical membrane-spanning segment; the sequence is IFFFFMAVYMVYATNTFLSAI. The Extracellular segment spans residues 164–181; it reads FIGRPPYQNYYPFLDWRS. A helical transmembrane segment spans residues 182–202; it reads STLHLALQAGLEYFAMAGACF. The Cytoplasmic portion of the chain corresponds to 203–271; it reads QDVCVDCYPV…DCLRPVISGT (69 aa). The chain crosses the membrane as a helical span at residues 272–292; that stretch reads IFVQFLVVGLVLGFTLINIVL. Residues 293–298 lie on the Extracellular side of the membrane; the sequence is FANLGS. The helical transmembrane segment at 299-319 threads the bilayer; sequence AIAALSFMAAVLLETTPFCIL. Topologically, residues 320 to 359 are cytoplasmic; it reads CNYLTEDCYKLADALFQSNWIDEEKRYQKTLMYFLQKLQQ. A helical transmembrane segment spans residues 360-380; it reads PITFMAMNVFPISVGTNISVT. Over 381 to 406 the chain is Extracellular; it reads KFSFSVFTLVKQMNISEKLAKSEMEE. An N-linked (GlcNAc...) asparagine glycan is attached at N394.

Belongs to the insect chemoreceptor superfamily. Heteromeric odorant receptor channel (TC 1.A.69) family. Or2a subfamily. As to quaternary structure, interacts with Orco. Complexes exist early in the endomembrane system in olfactory sensory neurons (OSNs), coupling these complexes to the conserved ciliary trafficking pathway.

It is found in the cell membrane. Its function is as follows. Odorant receptor which mediates acceptance or avoidance behavior, depending on its substrates. The odorant receptor repertoire encodes a large collection of odor stimuli that vary widely in identity, intensity, and duration. May form a complex with Orco to form odorant-sensing units, providing sensitive and prolonged odorant signaling and calcium permeability. Involved in the behavioral responses to butanol, ethyl acetate, propyl acetate, and pentyl acetate. Also responds to pyrazines. This chain is Odorant receptor 42a (Or42a), found in Drosophila melanogaster (Fruit fly).